The chain runs to 105 residues: MATLAQQKIRIRLKAFDRRLLDTSCEKIVDTANRTDATAIGPIPLPTKRRIYCVLRSPHVDKDSREHFETRTHRRIIDIYQPSSKTIDALMKLDLPAGVEIEVKL.

It belongs to the universal ribosomal protein uS10 family. In terms of assembly, part of the 30S ribosomal subunit.

Involved in the binding of tRNA to the ribosomes. The protein is Small ribosomal subunit protein uS10 of Crocosphaera subtropica (strain ATCC 51142 / BH68) (Cyanothece sp. (strain ATCC 51142)).